Reading from the N-terminus, the 81-residue chain is Photosystem I iron-sulfur center (81 aa).

4Fe-4S ferredoxin-type domains lie at 2-31 and 39-68; these read SHSV…MVPW and IASA…VRVY. [4Fe-4S] cluster-binding residues include Cys11, Cys14, Cys17, Cys21, Cys48, Cys51, Cys54, and Cys58.

In terms of assembly, the eukaryotic PSI reaction center is composed of at least 11 subunits. [4Fe-4S] cluster is required as a cofactor.

The protein localises to the plastid. Its subcellular location is the chloroplast thylakoid membrane. It catalyses the reaction reduced [plastocyanin] + hnu + oxidized [2Fe-2S]-[ferredoxin] = oxidized [plastocyanin] + reduced [2Fe-2S]-[ferredoxin]. Its function is as follows. Apoprotein for the two 4Fe-4S centers FA and FB of photosystem I (PSI); essential for photochemical activity. FB is the terminal electron acceptor of PSI, donating electrons to ferredoxin. The C-terminus interacts with PsaA/B/D and helps assemble the protein into the PSI complex. Required for binding of PsaD and PsaE to PSI. PSI is a plastocyanin/cytochrome c6-ferredoxin oxidoreductase, converting photonic excitation into a charge separation, which transfers an electron from the donor P700 chlorophyll pair to the spectroscopically characterized acceptors A0, A1, FX, FA and FB in turn. In Pleurastrum terricola (Filamentous green alga), this protein is Photosystem I iron-sulfur center.